Here is a 140-residue protein sequence, read N- to C-terminus: MGRVSGLVPSRFLTLLAHLVVVITLFWSRDSNIQACLPLTFTPEEYDKQDIQLVAALSVTLGLFAVELAGFLSGVSMFNSTQSLISIGAHCSASVALSFFIFERWECTTYWYIFVFCSALPAVTEMALFVTVFGLKKKPF.

Transmembrane regions (helical) follow at residues 7–27 and 53–73; these read LVPS…TLFW and LVAA…GFLS. N-linked (GlcNAc...) asparagine glycosylation is present at Asn79. Helical transmembrane passes span 83 to 103 and 113 to 133; these read SLIS…FIFE and IFVF…VTVF.

In terms of assembly, part of the tectonic-like complex (also named B9 complex). Interacts with TMEM237, TMEM231, MKS1 and TMEM216.

It is found in the membrane. The protein resides in the cell projection. Its subcellular location is the cilium. Plays a role in cilia formation and embryonic patterning. Requires for normal Sonic hedgehog (Shh) signaling in the neural tube and acts in combination with GLI2 and GLI3 to pattern ventral and intermediate neuronal cell types. During ciliogenesis regulates the ciliary transition zone localization of some MKS complex proteins. In Homo sapiens (Human), this protein is Transmembrane protein 107.